The chain runs to 30 residues: Brevinin-2Rg (30 aa).

Residues Cys24 and Cys30 are joined by a disulfide bond.

In terms of tissue distribution, expressed by the skin glands.

The protein resides in the secreted. Functionally, antimicrobial peptide. This Pelophylax ridibundus (Marsh frog) protein is Brevinin-2Rg.